We begin with the raw amino-acid sequence, 133 residues long: ATP synthase epsilon chain, chloroplastic (133 aa).

It belongs to the ATPase epsilon chain family. F-type ATPases have 2 components, CF(1) - the catalytic core - and CF(0) - the membrane proton channel. CF(1) has five subunits: alpha(3), beta(3), gamma(1), delta(1), epsilon(1). CF(0) has three main subunits: a, b and c.

The protein resides in the plastid. It localises to the chloroplast thylakoid membrane. Functionally, produces ATP from ADP in the presence of a proton gradient across the membrane. This chain is ATP synthase epsilon chain, chloroplastic, found in Ipomoea batatas (Sweet potato).